Here is an 88-residue protein sequence, read N- to C-terminus: U1-hexatoxin-Iw1d (88 aa).

The first 17 residues, 1–17 (LKFVVLICLVIMASTSA), serve as a signal peptide directing secretion. Glutamine 18 is modified (pyrrolidone carboxylic acid). Disulfide bonds link cysteine 20–cysteine 31, cysteine 25–cysteine 39, cysteine 30–cysteine 65, cysteine 49–cysteine 73, and cysteine 67–cysteine 80. The propeptide occupies 86–88 (RSE).

Belongs to the MIT-like AcTx family. As to expression, expressed by the venom gland.

The protein localises to the secreted. This chain is U1-hexatoxin-Iw1d, found in Illawarra wisharti (Illawarra funnel-web spider).